The primary structure comprises 862 residues: Alpha,alpha-trehalose-phosphate synthase [UDP-forming] 5 (862 aa).

At serine 5 the chain carries Phosphoserine. The residue at position 32 (threonine 32) is a Phosphothreonine. The segment at 60–546 (DRIIIVGNQL…ARSFIQDLER (487 aa)) is glycosyltransferase.

It in the N-terminal section; belongs to the glycosyltransferase 20 family. This sequence in the C-terminal section; belongs to the trehalose phosphatase family. Binds to the phosphopeptide-binding site of GRF/14-3-3 and to MBF1c. In terms of processing, both Ser-5 and Thr-32 must be phosphorylated for binding to GRF/14-3-3. As to expression, low expression in leaves, stems, flower buds, flowers and siliques.

The enzyme catalyses D-glucose 6-phosphate + UDP-alpha-D-glucose = alpha,alpha-trehalose 6-phosphate + UDP + H(+). This Arabidopsis thaliana (Mouse-ear cress) protein is Alpha,alpha-trehalose-phosphate synthase [UDP-forming] 5 (TPS5).